A 1396-amino-acid polypeptide reads, in one-letter code: Sterol 3-beta-glucosyltransferase (1396 aa).

Residues 1 to 16 are compositionally biased toward basic and acidic residues; the sequence is MRPLLDEAKRRVDRRL. Disordered stretches follow at residues 1–59, 82–193, and 206–233; these read MRPL…TKEG, HARF…AAPV, and SKGSMNQSPRSPPAETQEEQSQEQTSAS. Over residues 18–28 the composition is skewed to polar residues; that stretch reads ASRQSLSTSRI. 2 stretches are compositionally biased toward basic and acidic residues: residues 35–44 and 82–108; these read ERLKDDHDAQ and HARFDDSSDSERDTDRPPQKRTEKESQ. A compositionally biased stretch (polar residues) spans 156 to 175; that stretch reads GSSQRQGGAQTEPSTGNQMS. The 52-residue stretch at 237 to 288 folds into the GRAM 1 domain; it reads LRLMEMFGFESPEKVLVEYACSLVQSMLLQGYMYVTEGHICFYAYLPRKSTV. Residues 289 to 387 form the PH domain; the sequence is AIKSGYLYKR…WVKSLQKVIF (99 aa). 2 stretches are compositionally biased toward polar residues: residues 459-479 and 487-497; these read QAKNPSRESPQPGRTTPQSRA and SLTSGLSQVLG. Disordered stretches follow at residues 459–531 and 576–635; these read QAKN…RDLS and FRRQ…VQQS. Residues 585–595 are compositionally biased toward basic and acidic residues; it reads QFGRRHSDETA. One can recognise a GRAM 2 domain in the interval 719–785; it reads DRFRAHFALP…KDVENVEKEK (67 aa). The interval 841–880 is disordered; it reads EQDESEAAKAEHRMLQEARKDASGGLIPQTPSDESPEIHP. Residues 846–862 show a composition bias toward basic and acidic residues; the sequence is EAAKAEHRMLQEARKDA. Positions 907, 908, 910, 1210, 1212, 1225, 1229, 1230, 1249, and 1250 each coordinate UDP-alpha-D-glucose.

This sequence belongs to the glycosyltransferase 28 family.

It is found in the cytoplasm. It localises to the preautophagosomal structure membrane. The enzyme catalyses a sterol + UDP-alpha-D-glucose = a sterol 3-beta-D-glucoside + UDP + H(+). It catalyses the reaction ergosterol + UDP-alpha-D-glucose = ergosteryl 3-beta-D-glucoside + UDP + H(+). In terms of biological role, sterol glycosyltransferase responsible for the glycosylation of ergosterol to form ergosterol-glucoside. The sequence is that of Sterol 3-beta-glucosyltransferase from Aspergillus terreus (strain NIH 2624 / FGSC A1156).